Consider the following 140-residue polypeptide: ATP synthase epsilon chain (140 aa).

Belongs to the ATPase epsilon chain family. In terms of assembly, F-type ATPases have 2 components, CF(1) - the catalytic core - and CF(0) - the membrane proton channel. CF(1) has five subunits: alpha(3), beta(3), gamma(1), delta(1), epsilon(1). CF(0) has three main subunits: a, b and c.

It is found in the cell inner membrane. Functionally, produces ATP from ADP in the presence of a proton gradient across the membrane. This Stenotrophomonas maltophilia (strain R551-3) protein is ATP synthase epsilon chain.